We begin with the raw amino-acid sequence, 526 residues long: Rho guanine nucleotide exchange factor 3 (526 aa).

Residues 20–40 form a disordered region; it reads ELPPASGPAKDAEEPSNKRVK. Phosphoserine is present on residues serine 47 and serine 70. The region spanning 122–304 is the DH domain; sequence KRQEAIFELS…QGIVAEINTK (183 aa). The region spanning 291–449 is the PH domain; it reads INIIQGIVAE…WLNCIRQAKE (159 aa). 2 disordered regions span residues 464–502 and 507–526; these read EGSFLNPTTGSRELQGETKLEQMDQSDSESDCSMDTSEV and EHMEQTDSSCGNSRHGESNV. Over residues 466–475 the composition is skewed to polar residues; it reads SFLNPTTGSR.

Interacts with RHOA and RHOB.

The protein localises to the cytoplasm. In terms of biological role, acts as a guanine nucleotide exchange factor (GEF) for RhoA and RhoB GTPases. The polypeptide is Rho guanine nucleotide exchange factor 3 (ARHGEF3) (Macaca fascicularis (Crab-eating macaque)).